We begin with the raw amino-acid sequence, 905 residues long: Catenin alpha-2 (905 aa).

The residue at position 632 (T632) is a Phosphothreonine. 3 positions are modified to phosphoserine: S640, S651, and S853. Residues V869–T879 are compositionally biased toward basic and acidic residues. The disordered stretch occupies residues V869–S891. Positions R880–I890 are enriched in basic residues. A Phosphoserine modification is found at S891.

Belongs to the vinculin/alpha-catenin family. Interacts with CDH1 and CDH2. Interacts with ZNF639; recruits CTNNA2 to the nucleus. Interacts with F-actin.

It is found in the cell membrane. The protein localises to the cytoplasm. It localises to the cytoskeleton. The protein resides in the cell junction. Its subcellular location is the adherens junction. It is found in the cell projection. The protein localises to the axon. It localises to the nucleus. Its function is as follows. May function as a linker between cadherin adhesion receptors and the cytoskeleton to regulate cell-cell adhesion and differentiation in the nervous system. Required for proper regulation of cortical neuronal migration and neurite growth. It acts as a negative regulator of Arp2/3 complex activity and Arp2/3-mediated actin polymerization. It thereby suppresses excessive actin branching which would impair neurite growth and stability. Regulates morphological plasticity of synapses and cerebellar and hippocampal lamination during development. Functions in the control of startle modulation. This chain is Catenin alpha-2 (CTNNA2), found in Pongo abelii (Sumatran orangutan).